We begin with the raw amino-acid sequence, 423 residues long: Serine--tRNA ligase 2 (423 aa).

Position 231–233 (231–233) interacts with L-serine; the sequence is TAE. ATP is bound at residue 262-264; sequence RSE. Glu285 provides a ligand contact to L-serine. Residue 349–352 coordinates ATP; that stretch reads EISS. Position 384 (Ser384) interacts with L-serine.

It belongs to the class-II aminoacyl-tRNA synthetase family. Type-1 seryl-tRNA synthetase subfamily. As to quaternary structure, homodimer. The tRNA molecule binds across the dimer.

It is found in the cytoplasm. The enzyme catalyses tRNA(Ser) + L-serine + ATP = L-seryl-tRNA(Ser) + AMP + diphosphate + H(+). It catalyses the reaction tRNA(Sec) + L-serine + ATP = L-seryl-tRNA(Sec) + AMP + diphosphate + H(+). It participates in aminoacyl-tRNA biosynthesis; selenocysteinyl-tRNA(Sec) biosynthesis; L-seryl-tRNA(Sec) from L-serine and tRNA(Sec): step 1/1. Its function is as follows. Catalyzes the attachment of serine to tRNA(Ser). Is also able to aminoacylate tRNA(Sec) with serine, to form the misacylated tRNA L-seryl-tRNA(Sec), which will be further converted into selenocysteinyl-tRNA(Sec). The protein is Serine--tRNA ligase 2 of Enterococcus faecalis (strain ATCC 700802 / V583).